Consider the following 670-residue polypeptide: MEAKKEIQELYEKLLRHNKKYYQDDSPEITDAEYDSIKDRYLKLLEANPSLGFPVVVGYPASEKFQKVKHLSPMLSLRNIFSEEELVEYIEKTKRFLNLKSALEFLCEPKIDGVSFSARYVNGKLVSCATRGDGKIGENIIDNMKVINGFPIEIMDVPDLLEVRGEVFLDHDTFQTLEGFSNPRNAAAGSLRQLNPEITNERNLQYFAYSASKIDGIEHQEDVLHFLSGRGFMTNPLRLASSKVPEIMSFYDSVYRRRSQIKYDIDGLVYKVNDLKLHARLGTLSDAPRWAIAHKFPSHRAKTILEKIKLSVGRTGIITPVAHLKPITIGGVVISRASLYNEDELERKDIREGDLVIVERAGDVIPKVLEVDISYRTNQERFIFPDKCPSCSSTLIRKNNEAATRCNNSKKCPEQVIQQIKHLVSAQAFDIDGIGTSHISFFIEKGFISEPADIFRLDKHRDEIKKYDGWGEKSVENILKNIKNSRKISLEKFIFSLGIKNIGEKTAYMLAQQFKSFANWFDKMSMLKDDTQTEDEIRNLDGMGSCICESLLDFFSDSDNCNMVKSLSNHVMITDHTVNIGGSLSGKKFVFTGTLLSITREEAKEIIKKAGGIVVNSISKQIDYVVAGEKAGSKLAKANELGIAIIEEKTLIEFTNGNNTPALKKETSSN.

Residues 31–35 (DAEYD), 76–77 (SL), and glutamate 108 contribute to the NAD(+) site. Lysine 110 acts as the N6-AMP-lysine intermediate in catalysis. Residues arginine 131, glutamate 166, lysine 271, and lysine 295 each contribute to the NAD(+) site. Residues cysteine 388, cysteine 391, cysteine 406, and cysteine 412 each coordinate Zn(2+). The BRCT domain maps to 579-668 (NIGGSLSGKK…NTPALKKETS (90 aa)).

Belongs to the NAD-dependent DNA ligase family. LigA subfamily. It depends on Mg(2+) as a cofactor. The cofactor is Mn(2+).

It carries out the reaction NAD(+) + (deoxyribonucleotide)n-3'-hydroxyl + 5'-phospho-(deoxyribonucleotide)m = (deoxyribonucleotide)n+m + AMP + beta-nicotinamide D-nucleotide.. In terms of biological role, DNA ligase that catalyzes the formation of phosphodiester linkages between 5'-phosphoryl and 3'-hydroxyl groups in double-stranded DNA using NAD as a coenzyme and as the energy source for the reaction. It is essential for DNA replication and repair of damaged DNA. The polypeptide is DNA ligase (Neorickettsia sennetsu (strain ATCC VR-367 / Miyayama) (Ehrlichia sennetsu)).